The primary structure comprises 188 residues: Photosystem I assembly protein Ycf4 (188 aa).

2 helical membrane passes run 26–48 (MLWA…SSYF) and 68–90 (AALT…VFFL).

It belongs to the Ycf4 family.

The protein resides in the cellular thylakoid membrane. Its function is as follows. Seems to be required for the assembly of the photosystem I complex. The protein is Photosystem I assembly protein Ycf4 of Picosynechococcus sp. (strain ATCC 27264 / PCC 7002 / PR-6) (Agmenellum quadruplicatum).